The chain runs to 319 residues: Ribonucleoside-diphosphate reductase small chain (319 aa).

3 residues coordinate Fe cation: Asp70, Glu101, and His104. Tyr108 is an active-site residue. Fe cation-binding residues include Glu163, Glu197, and His200. Residues 313 to 319 form an interaction with R1 region; it reads FSLDVDF.

This sequence belongs to the ribonucleoside diphosphate reductase small chain family. As to quaternary structure, interacts with RNR1/OPG080 subunit. Can interact with host RNR1 supunit. Fe cation serves as cofactor.

It carries out the reaction a 2'-deoxyribonucleoside 5'-diphosphate + [thioredoxin]-disulfide + H2O = a ribonucleoside 5'-diphosphate + [thioredoxin]-dithiol. Its function is as follows. Ribonucleoside-diphosphate reductase holoenzyme provides the precursors necessary for viral DNA synthesis. Allows virus growth in non-dividing cells. Catalyzes the biosynthesis of deoxyribonucleotides from the corresponding ribonucleotides. This chain is Ribonucleoside-diphosphate reductase small chain (OPG048), found in Variola virus.